Consider the following 1347-residue polypeptide: Protocadherin-11 X-linked (1347 aa).

A signal peptide spans 1-23 (MDLLSGTYIFAVLLACVVFHSGA). Over 24 to 812 (QEKNYTIREE…VSSPTSDYVK (789 aa)) the chain is Extracellular. 7 consecutive Cadherin domains span residues 26–139 (KNYT…APLF), 140–249 (PATV…HPVF), 250–355 (KETE…VPSI), 362–466 (NPVN…APVF), 467–570 (TQSF…SPVF), 571–673 (THNE…KPVF), and 677–795 (PSNC…APVT). N-linked (GlcNAc...) asparagine glycosylation is found at asparagine 27, asparagine 48, and asparagine 54. The N-linked (GlcNAc...) asparagine glycan is linked to asparagine 344. An N-linked (GlcNAc...) asparagine glycan is attached at asparagine 553. N-linked (GlcNAc...) asparagine glycosylation occurs at asparagine 773. A helical membrane pass occupies residues 813 to 833 (ILVAAVAGTITVVVVIFITAV). Residues 834-1347 (VRCRQAPHLK…DSPIMEEHPL (514 aa)) lie on the Cytoplasmic side of the membrane. Disordered stretches follow at residues 1057–1091 (LPEGSQESSSDGGLGDHDAGSLTSTSHGLPLGYPQ), 1097–1116 (RATPSNRTEGDGNSDPESTF), and 1326–1347 (FTPRQQARPSRGDSPIMEEHPL).

Expressed strongly in fetal brain and brain (cortex, amygdala, thalamus, substantia nigra, hippocampus, caudate nucleus and corpus callosum). Expressed at low level in testis.

Its subcellular location is the cell membrane. In terms of biological role, potential calcium-dependent cell-adhesion protein. The chain is Protocadherin-11 X-linked (PCDH11X) from Homo sapiens (Human).